The sequence spans 406 residues: 1-deoxy-D-xylulose 5-phosphate reductoisomerase (406 aa).

Residues threonine 21, glycine 22, serine 23, isoleucine 24, glycine 47, glutamine 50, and asparagine 127 each contribute to the NADPH site. A 1-deoxy-D-xylulose 5-phosphate-binding site is contributed by lysine 128. Glutamate 129 contributes to the NADPH binding site. A Mn(2+)-binding site is contributed by aspartate 151. Residues serine 152, glutamate 153, serine 177, and histidine 200 each coordinate 1-deoxy-D-xylulose 5-phosphate. Glutamate 153 lines the Mn(2+) pocket. An NADPH-binding site is contributed by glycine 206. Positions 213, 218, 219, and 222 each coordinate 1-deoxy-D-xylulose 5-phosphate. Position 222 (glutamate 222) interacts with Mn(2+).

This sequence belongs to the DXR family. It depends on Mg(2+) as a cofactor. Requires Mn(2+) as cofactor.

It carries out the reaction 2-C-methyl-D-erythritol 4-phosphate + NADP(+) = 1-deoxy-D-xylulose 5-phosphate + NADPH + H(+). It functions in the pathway isoprenoid biosynthesis; isopentenyl diphosphate biosynthesis via DXP pathway; isopentenyl diphosphate from 1-deoxy-D-xylulose 5-phosphate: step 1/6. Catalyzes the NADPH-dependent rearrangement and reduction of 1-deoxy-D-xylulose-5-phosphate (DXP) to 2-C-methyl-D-erythritol 4-phosphate (MEP). This Mycobacterium leprae (strain Br4923) protein is 1-deoxy-D-xylulose 5-phosphate reductoisomerase.